Reading from the N-terminus, the 1159-residue chain is Protocadherin-17 (1159 aa).

An N-terminal signal peptide occupies residues 1-17; it reads MYLSICCCFLLWAPALT. Cadherin domains follow at residues 18–132, 133–243, 244–351, 353–472, 473–583, and 589–695; these read LKNL…APSF, SSDQ…SPVF, EAPS…APSI, FVSV…PPRF, TKGL…APVI, and QNDT…VPRV. Residues 18 to 707 are Extracellular-facing; sequence LKNLNYSVPE…EQHHWDMSLP (690 aa). A glycan (N-linked (GlcNAc...) asparagine) is linked at asparagine 22. Residues 186 to 188 carry the Cell attachment site motif; sequence RGD. Residues asparagine 266, asparagine 439, asparagine 453, asparagine 504, asparagine 566, and asparagine 590 are each glycosylated (N-linked (GlcNAc...) asparagine). A helical transmembrane segment spans residues 708–728; that stretch reads LIVTLSTISIILLAAMITIAV. At 729-1159 the chain is on the cytoplasmic side; the sequence is KCKRENKEIR…RGNDPVAVRK (431 aa). 2 disordered regions span residues 858-909 and 1108-1132; these read NFPA…KGSC and SRDSSEMGAVLEQLDHPNRDLGRES. A compositionally biased stretch (polar residues) spans 867 to 879; it reads GSRQQFVQSSSTF. Composition is skewed to basic and acidic residues over residues 880–895 and 1120–1132; these read KDPERASLRDSGHGDS and QLDHPNRDLGRES.

It localises to the cell membrane. In terms of biological role, potential calcium-dependent cell-adhesion protein. This chain is Protocadherin-17 (PCDH17), found in Homo sapiens (Human).